We begin with the raw amino-acid sequence, 332 residues long: Probable cation efflux system protein MT2084 (332 aa).

5 helical membrane-spanning segments follow: residues 46-66 (ISLL…VMSG), 75-95 (IHNF…ALGA), 113-133 (AGSF…YEAI), 145-165 (VGWV…VALY), and 202-222 (VALG…AAIL).

This sequence belongs to the cation diffusion facilitator (CDF) transporter (TC 2.A.4) family.

It is found in the cell membrane. The chain is Probable cation efflux system protein MT2084 from Mycobacterium tuberculosis (strain CDC 1551 / Oshkosh).